The primary structure comprises 638 residues: MSKVIGIDLGTTNSCVAIMEGGEPVVIANSEGSRTTPSMVAFAESGERLVGQQAKRQAVTNPENTLFAIKRLIGRKFDTDEVRKDISISPFKIVKADNGDAWVDVRGKMYSPPEVSAIVLQKMKKTAEDYLGETVTDAVITVPAYFNDSQRQATKDAGKIAGLNVLRIINEPTAAALAYGLDKKKDEKIAVFDLGGGTFDISILELGDGVFEVKSTNGDTFLGGEDFDQRVIDWIADEFKKDQGIDLRGDKMALQRLKEAAEKAKCELSSSMETDINLPFITADATGPKHLTMKLSRAKLEALCAELLDKLEGPCRTALKDAGLSPSEVDEVILVGGMTRMPAVQKRVQEIFGKAPNKGVNPDEVVAIGAGIQGGVLRGDVKDVLLLDVTPLSLGIETLGSVMTKLIDKNTTIPCRKSQVFSTASDNQPAVTIHVLQGEREMASDNKTLGNFELTGIPPAPRGVPQIEVTFDIDANGIVHVSAKDLGTGKEQSIRITASSGLSKEEIDKMVREAESHAADDKKKRELIEARNHADTLAYSTEKSLKEYGDKIGDDEKKKIEEAVAALKKAMEGDDVDAIKQATDALTQASHKLAEAVYAKTQTEGGAQPGAEADGDTGAKGGEKVVDADFEEVKDDKK.

Thr-198 bears the Phosphothreonine; by autocatalysis mark. Residues Lys-600–Lys-638 form a disordered region. Acidic residues predominate over residues Ala-628–Lys-638.

The protein belongs to the heat shock protein 70 family.

Acts as a chaperone. The chain is Chaperone protein DnaK from Geobacter metallireducens (strain ATCC 53774 / DSM 7210 / GS-15).